A 373-amino-acid chain; its full sequence is Extensin-1 (373 aa).

An N-terminal signal peptide occupies residues 1–19 (MASFLVLAFSLAFVSQTTA). 36 consecutive repeat copies span residues 25 to 33 (SPPPPVKHY), 34 to 40 (SPPPVYK), 41 to 49 (SPPPPVKHY), 50 to 56 (SPPPVYK), 57 to 65 (SPPPPVKHY), 66 to 72 (SPPPVYK), 73 to 81 (SPPPPVKYY), 82 to 88 (SPPPVYK), 97 to 105 (SPPPPVKHY), 106 to 112 (SPPPVYK), 113 to 121 (SPPPPVKHY), 122 to 128 (SPPPVYK), 129 to 137 (SPPPPVKHY), 138 to 144 (SPPPVYK), 145 to 153 (SPPPPVKHY), 154 to 160 (SPPPVYK), 161 to 169 (SPPPPVKYY), 170 to 176 (SPPPVYK), 177 to 185 (SPPPPVKHY), 186 to 192 (SPPPVYK), 193 to 201 (SPPPPVKYY), 202 to 208 (SPPPVYK), 209 to 217 (SPPPPVKHY), 218 to 224 (SPPPVYK), 225 to 233 (SPPPPVKYY), 234 to 240 (SPPPVYK), 241 to 248 (SPPPPVHY), 249 to 256 (SPPPVVYH), 257 to 264 (SPPPPVHY), 265 to 272 (SPPPVVYH), 273 to 280 (SPPPPVHY), 281 to 288 (SPPPVVYH), 289 to 296 (SPPPPVHY), 297 to 304 (SPPPVVYH), 305 to 312 (SPPPPVHY), and 313 to 320 (SPPPVVYH). A 13 X 9 AA repeats of S-P-P-P-P-V-K-[HY]-Y region spans residues 25 to 233 (SPPPPVKHYS…KSPPPPVKYY (209 aa)). The tract at residues 34–240 (SPPPVYKSPP…KYYSPPPVYK (207 aa)) is 13 X 7 AA repeats of S-P-P-P-V-Y-K. The tract at residues 241–312 (SPPPPVHYSP…YHSPPPPVHY (72 aa)) is 5 X 8 AA repeats of S-P-P-P-P-V-H-Y. A 5 X 8 AA repeats of S-P-P-P-V-V-Y-H region spans residues 249–320 (SPPPVVYHSP…HYSPPPVVYH (72 aa)). Isodityrosine cross-linking regions lie at residues 329 to 332 (YEYK) and 363 to 366 (YLYK). The tract at residues 349–373 (PPPPVHHYSPPHQPYLYKSPPPPHY) is disordered.

It belongs to the extensin family. In terms of processing, extensins contain a characteristic repeat of the pentapeptide Ser-Pro(4). For this particular extensin, a typical repeat of Ser-Pro(3) is found. In both cases, the proline residues are hydroxylated and then O-glycosylated (arabinosylation). Synthetised as soluble proteins which become insolubilised in the cell wall through the intermolecular cross-linking of Tyr on adjacent monomers. Isodityrosine (IDT) stabilizes and makes rigid the part of the polypeptide where IDT functional sites are present. As to expression, predominantly expressed in the roots. Not detected in the leaves, nor in flowers or flower buds. Wounding reverses this pattern, turning on the gene in the leaves and repressing it in the roots.

Its subcellular location is the secreted. It is found in the primary cell wall. Structural component which strengthens the primary cell wall. This Arabidopsis thaliana (Mouse-ear cress) protein is Extensin-1.